Consider the following 1294-residue polypeptide: uncharacterized protein (1294 aa).

Residues Met-1 to Tyr-375 are Extracellular-facing. Positions Leu-28–Gln-287 constitute an ABC transporter 1 domain. An N-linked (GlcNAc...) asparagine glycan is attached at Asn-41. Residue Gly-62 to Thr-69 participates in ATP binding. N-linked (GlcNAc...) asparagine glycans are attached at residues Asn-86, Asn-101, Asn-151, Asn-341, Asn-349, and Asn-371. The chain crosses the membrane as a helical span at residues Val-376–Tyr-396. Residues Tyr-397–Gln-495 are Cytoplasmic-facing. The helical transmembrane segment at Phe-496 to Val-516 threads the bilayer. Residues Ser-517 to Thr-530 lie on the Extracellular side of the membrane. Asn-528 is a glycosylation site (N-linked (GlcNAc...) asparagine). Residues Phe-531–Val-551 traverse the membrane as a helical segment. Over Arg-552 to Pro-604 the chain is Cytoplasmic. A helical transmembrane segment spans residues Ala-605–Leu-625. Residues His-626–Leu-1038 lie on the Extracellular side of the membrane. The 263-residue stretch at Ile-679 to Ser-941 folds into the ABC transporter 2 domain. Gly-727–Ser-734 provides a ligand contact to ATP. Residue Asn-983 is glycosylated (N-linked (GlcNAc...) asparagine). A helical transmembrane segment spans residues Met-1039 to Val-1059. Residues Lys-1060–Glu-1120 are Cytoplasmic-facing. Residues Leu-1121–Leu-1141 form a helical membrane-spanning segment. Residues Pro-1142 to Tyr-1266 lie on the Extracellular side of the membrane. A helical transmembrane segment spans residues Leu-1267–Ala-1287. Over Lys-1288 to Trp-1294 the chain is Cytoplasmic.

Belongs to the ABC transporter superfamily. ABCG family. PDR (TC 3.A.1.205) subfamily.

The protein localises to the membrane. This is an uncharacterized protein from Saccharomyces cerevisiae (strain ATCC 204508 / S288c) (Baker's yeast).